A 385-amino-acid chain; its full sequence is DNA replication and repair protein RecF (385 aa).

30-37 (GRNGQGKT) lines the ATP pocket.

The protein belongs to the RecF family.

It localises to the cytoplasm. The RecF protein is involved in DNA metabolism; it is required for DNA replication and normal SOS inducibility. RecF binds preferentially to single-stranded, linear DNA. It also seems to bind ATP. The polypeptide is DNA replication and repair protein RecF (Leifsonia xyli subsp. xyli (strain CTCB07)).